A 56-amino-acid polypeptide reads, in one-letter code: Large ribosomal subunit protein bL32A (56 aa).

Residues 1–56 (MAVPARRTSKAKKNKRRTHKGLTAPGLSRDSETGEYRMSHRISPDGTYKGRTIIEK) are disordered. Over residues 7-20 (RTSKAKKNKRRTHK) the composition is skewed to basic residues. The segment covering 29-38 (RDSETGEYRM) has biased composition (basic and acidic residues).

It belongs to the bacterial ribosomal protein bL32 family.

The chain is Large ribosomal subunit protein bL32A (rpmF1) from Listeria innocua serovar 6a (strain ATCC BAA-680 / CLIP 11262).